The sequence spans 114 residues: MNLILLLVIGFLVFIGTYMILSINLIRIVIGISIYTHAGNLIIMSMGTYGSSRSEPLITGGNQLFVDPLLQAIVLTAIVIGFGMTAFLLVLVYRTYKVTKEDEIEGLRGEDDAK.

The next 3 helical transmembrane spans lie at 3-23, 28-48, and 72-92; these read LILLLVIGFLVFIGTYMILSI, IVIGISIYTHAGNLIIMSMGT, and AIVLTAIVIGFGMTAFLLVLV.

Belongs to the CPA3 antiporters (TC 2.A.63) subunit C family. May form a heterooligomeric complex that consists of seven subunits: mnhA2, mnhB2, mnhC2, mnhD2, mnhE2, mnhF2 and mnhG2.

It is found in the cell membrane. In Staphylococcus aureus (strain Mu3 / ATCC 700698), this protein is Putative antiporter subunit mnhC2 (mnhC2).